The primary structure comprises 163 residues: 3-dehydroquinate dehydratase (163 aa).

Catalysis depends on Tyr-28, which acts as the Proton acceptor. The substrate site is built by Asn-80, His-86, and Asp-93. The Proton donor role is filled by His-106. Residues 107–108 and Arg-117 each bind substrate; that span reads IS.

The protein belongs to the type-II 3-dehydroquinase family. As to quaternary structure, homododecamer.

The enzyme catalyses 3-dehydroquinate = 3-dehydroshikimate + H2O. It functions in the pathway metabolic intermediate biosynthesis; chorismate biosynthesis; chorismate from D-erythrose 4-phosphate and phosphoenolpyruvate: step 3/7. Its function is as follows. Catalyzes a trans-dehydration via an enolate intermediate. The polypeptide is 3-dehydroquinate dehydratase (Bradyrhizobium sp. (strain BTAi1 / ATCC BAA-1182)).